The following is an 863-amino-acid chain: Leucine--tRNA ligase (863 aa).

The 'HIGH' region signature appears at P42–H52. A 'KMSKS' region motif is present at residues K623–S627. K626 contributes to the ATP binding site.

This sequence belongs to the class-I aminoacyl-tRNA synthetase family.

It localises to the cytoplasm. The enzyme catalyses tRNA(Leu) + L-leucine + ATP = L-leucyl-tRNA(Leu) + AMP + diphosphate. The sequence is that of Leucine--tRNA ligase from Paraburkholderia xenovorans (strain LB400).